The primary structure comprises 528 residues: MREHSHGANYVSSVHWAAVLDSISELIDQCQEKEKEKKPVPEDGSIAPQIPGPRLLYEPVKETKAEILASMPARTVVDRMVARYFNALGIAPAILHSAQFLREYESFWKDPDATPFVWIGLLFSVICLAVQFQQPGEEAAEWSSLMRIRQFHDRIVQCLVLGQYTRGGPYVVETMVNYCASELCITKDTDVGPWLPLGIMVPLAVSRGYHRDPAGFPNISPFAGEMRRRVATPPNHATSSTPTSTRTPPTYHPHGPRPKSPLSSTPSPRTESTKSAAPSRDLAADAHDRPYPEILALDKDLQTIETSLPPIFRWQPLSQSFMVPGQVLMFRLWLRLAVLRLVIWLHRKYLAPAYSAAPYAYSRAACARAALEIAEFQLLLHEETRPGGQLHQMRWMQSSLMQSTFLLGMSVACYWMQLTRTALPGADQDMEMRERIRDRLRDTYPLWLRCSAVSRDAREAAERLRQLPDLQGLLPDVEGQLSAQESPGSGVPACWDIFHGTGRHARALDAVLGDMDRSRKTNADWARV.

The tract at residues 232–283 (TPPNHATSSTPTSTRTPPTYHPHGPRPKSPLSSTPSPRTESTKSAAPSRDLA) is disordered. Over residues 238 to 249 (TSSTPTSTRTPP) the composition is skewed to low complexity. The span at 261-276 (PLSSTPSPRTESTKSA) shows a compositional bias: polar residues.

Its subcellular location is the nucleus. Its function is as follows. Transcription factor that regulates the expression of the gene cluster that mediates the biosynthesis of the tetramic acid Sch210972, a potential anti-HIV fungal natural product that contains a decalin core. This is Transcription factor cghF from Chaetomium globosum (strain ATCC 6205 / CBS 148.51 / DSM 1962 / NBRC 6347 / NRRL 1970) (Soil fungus).